The primary structure comprises 349 residues: Thiamine thiazole synthase, chloroplastic (349 aa).

Residues Met-1–Arg-45 constitute a chloroplast transit peptide. Residues Ala-94, Glu-114–Gln-115, Gly-122, and Ala-187 contribute to the substrate site. The residue at position 216 (Cys-216) is a 2,3-didehydroalanine (Cys). Substrate is bound by residues Asp-218, His-233, Met-285, and Arg-295 to Gly-297.

The protein belongs to the THI4 family. As to quaternary structure, homooctamer. Interacts with RBCX1 and RBCX1. Interacts with CPK33. Requires Fe cation as cofactor. During the catalytic reaction, a sulfide is transferred from Cys-216 to a reaction intermediate, generating a dehydroalanine residue. Not phosphorylated in vitro by CPK33. Expressed at high levels in chloroplast-containing parenchymatic cells of leaves, inflorescence shoots and flowers, and at lower levels in the vascular system. In young plants, detected in roots and shoots including cotyledons, leaves and hypocotyls. Also observed in apical meristematic regions, siliques and embryos. Low expression in roots, limited to the vascular tissue. Broadly expressed in roots, cotyledons, leaves, hypocotyls, inflorescences, siliques, and strongly in guard cells.

The protein localises to the plastid. The protein resides in the chloroplast. It localises to the mitochondrion. Its subcellular location is the cell membrane. It catalyses the reaction [ADP-thiazole synthase]-L-cysteine + glycine + NAD(+) = [ADP-thiazole synthase]-dehydroalanine + ADP-5-ethyl-4-methylthiazole-2-carboxylate + nicotinamide + 3 H2O + 2 H(+). In terms of biological role, involved in biosynthesis of the thiamine precursor thiazole. Catalyzes the conversion of NAD and glycine to adenosine diphosphate 5-(2-hydroxyethyl)-4-methylthiazole-2-carboxylic acid (ADT), an adenylated thiazole intermediate. The reaction includes an iron-dependent sulfide transfer from a conserved cysteine residue of the protein to a thiazole intermediate. The enzyme can only undergo a single turnover, which suggests it is a suicide enzyme. May have additional roles in adaptation to various stress conditions and in DNA damage tolerance. Acts as a positive regulator for the abscisic acid-induced activation of slow type anion channels during stomatal closure by repressing CPK33 kinase activity. In Arabidopsis thaliana (Mouse-ear cress), this protein is Thiamine thiazole synthase, chloroplastic.